We begin with the raw amino-acid sequence, 88 residues long: Small ribosomal subunit protein bS20 (88 aa).

The protein belongs to the bacterial ribosomal protein bS20 family.

In terms of biological role, binds directly to 16S ribosomal RNA. The sequence is that of Small ribosomal subunit protein bS20 from Methylocella silvestris (strain DSM 15510 / CIP 108128 / LMG 27833 / NCIMB 13906 / BL2).